A 1588-amino-acid chain; its full sequence is Multicopy suppressor of chk1 protein 1 (1588 aa).

Residues His38–Gly60 form a disordered region. Polar residues predominate over residues Asn51 to Gly60. The region spanning Asn82–Pro124 is the JmjN domain. The segment at Lys298–Ser345 adopts a PHD-type 1 zinc-finger fold. Polar residues predominate over residues Pro385–Pro395. The tract at residues Pro385 to Lys412 is disordered. The JmjC domain occupies Phe475–Met645. Positions Glu848–Leu872 are disordered. The PHD-type 2 zinc-finger motif lies at Phe1171 to Arg1220. The interval Ala1319 to Gln1341 is disordered. The PHD-type 3 zinc finger occupies Ser1454–Lys1505.

It is found in the nucleus. Its function is as follows. Has a role in regulating chromatin structure via global deacetylation of histone H3. This function is associated with the activity of a histone deacetylase. The polypeptide is Multicopy suppressor of chk1 protein 1 (msc1) (Schizosaccharomyces pombe (strain 972 / ATCC 24843) (Fission yeast)).